A 279-amino-acid polypeptide reads, in one-letter code: Oxygen-dependent coproporphyrinogen-III oxidase (279 aa).

Residue S102 participates in substrate binding. A divalent metal cation-binding residues include H106 and H116. H116 acts as the Proton donor in catalysis. Substrate is bound at residue 118 to 120; sequence NTR. 2 residues coordinate a divalent metal cation: H149 and H179. The interval 244 to 279 is important for dimerization; sequence YVEFNLLYDRGTKFGLMTDGNVEAILMSLPPEVKFN.

This sequence belongs to the aerobic coproporphyrinogen-III oxidase family. As to quaternary structure, homodimer. The cofactor is a divalent metal cation.

The protein resides in the cytoplasm. It catalyses the reaction coproporphyrinogen III + O2 + 2 H(+) = protoporphyrinogen IX + 2 CO2 + 2 H2O. Its pathway is porphyrin-containing compound metabolism; protoporphyrin-IX biosynthesis; protoporphyrinogen-IX from coproporphyrinogen-III (O2 route): step 1/1. In terms of biological role, involved in the heme biosynthesis. Catalyzes the aerobic oxidative decarboxylation of propionate groups of rings A and B of coproporphyrinogen-III to yield the vinyl groups in protoporphyrinogen-IX. The protein is Oxygen-dependent coproporphyrinogen-III oxidase of Rickettsia akari (strain Hartford).